Here is a 780-residue protein sequence, read N- to C-terminus: Subtilisin-like protease SBT5.1 (780 aa).

The signal sequence occupies residues 1-25 (MMRCLTITIMFFMFFFLSVIQKCKS). Residues 26–106 (ETSKSGDYII…VFPDQMLQLH (81 aa)) constitute a propeptide, activation peptide. Residues 33 to 106 (YIIYMGAASS…VFPDQMLQLH (74 aa)) enclose the Inhibitor I9 domain. The Peptidase S8 domain maps to 110 to 617 (SWDFLVQESY…AGQVTIFGPS (508 aa)). Asp-147 acts as the Charge relay system in catalysis. An N-linked (GlcNAc...) asparagine glycan is attached at Asn-197. His-215 acts as the Charge relay system in catalysis. Asn-230 is a glycosylation site (N-linked (GlcNAc...) asparagine). The 85-residue stretch at 385-469 (IDANEEAARN…PEDGIQIMSY (85 aa)) folds into the PA domain. Residue Asn-471 is glycosylated (N-linked (GlcNAc...) asparagine). The Charge relay system role is filled by Ser-550. Asn-776 carries N-linked (GlcNAc...) asparagine glycosylation.

Belongs to the peptidase S8 family.

Its subcellular location is the secreted. This is Subtilisin-like protease SBT5.1 from Arabidopsis thaliana (Mouse-ear cress).